The following is a 317-amino-acid chain: Nicotianamine synthase (317 aa).

Belongs to the nicotianamine synthase (NAS)-like family. Homomultimer. In terms of tissue distribution, leaves and roots.

It carries out the reaction 3 S-adenosyl-L-methionine = nicotianamine + 3 S-methyl-5'-thioadenosine + 3 H(+). Functionally, synthesizes nicotianamine, a polyamine that serves as a sensor for the physiological iron status within the plant, and/or might be involved in the transport of iron. The chain is Nicotianamine synthase (CHLN) from Solanum lycopersicum (Tomato).